The following is a 54-amino-acid chain: Ovomucoid (54 aa).

The Kazal-like domain maps to 4 to 54; it reads VDCSDYPKPVCSLEYMPLCGSDSKTYSNKCDFCNAFVDSNGTLSLSHFGKC. Disulfide bonds link Cys6–Cys36, Cys14–Cys33, and Cys22–Cys54. An N-linked (GlcNAc...) asparagine glycan is attached at Asn43.

It localises to the secreted. In Circus aeruginosus (Western marsh harrier), this protein is Ovomucoid.